The sequence spans 474 residues: L-arabinose isomerase (474 aa).

Mn(2+) contacts are provided by Glu-306, Glu-331, His-348, and His-447.

Belongs to the arabinose isomerase family. Mn(2+) serves as cofactor.

It catalyses the reaction beta-L-arabinopyranose = L-ribulose. It participates in carbohydrate degradation; L-arabinose degradation via L-ribulose; D-xylulose 5-phosphate from L-arabinose (bacterial route): step 1/3. In terms of biological role, catalyzes the conversion of L-arabinose to L-ribulose. This is L-arabinose isomerase from Pediococcus pentosaceus (strain ATCC 25745 / CCUG 21536 / LMG 10740 / 183-1w).